We begin with the raw amino-acid sequence, 1798 residues long: Non-reducing polyketide synthase nscA (1798 aa).

The segment at Arg25–His256 is N-terminal acylcarrier protein transacylase domain (SAT). The Ketosynthase family 3 (KS3) domain occupies Ser392 to Asp825. Catalysis depends on for beta-ketoacyl synthase activity residues Cys565, His700, and His743. Residues Phe931–Pro1224 are malonyl-CoA:ACP transacylase (MAT) domain. Residues His1322–Ala1458 form an N-terminal hotdog fold region. The 311-residue stretch at His1322–Asp1632 folds into the PKS/mFAS DH domain. The Proton acceptor; for dehydratase activity role is filled by His1354. The tract at residues His1390–Arg1628 is product template (PT) domain. Positions Ala1486–Asp1632 are C-terminal hotdog fold. Asp1543 serves as the catalytic Proton donor; for dehydratase activity. The disordered stretch occupies residues Leu1695–Pro1721. Residues Pro1721–Cys1798 form the Carrier domain. At Ser1758 the chain carries O-(pantetheine 4'-phosphoryl)serine.

It depends on pantetheine 4'-phosphate as a cofactor.

It functions in the pathway secondary metabolite biosynthesis. Its function is as follows. Non-reducing polyketide synthase; part of the gene cluster that mediates the biosynthesis of neosartoricin B, a prenylated anthracenone that probably exhibits T-cell antiproliferative activity, suggestive of a physiological role as an immunosuppressive agent. The non-reducing polyketide synthase nscA probably synthesizes and cyclizes the decaketide backbone. The hydrolase nscB then mediates the product release through hydrolysis followed by spontaneous decarboxylation. The prenyltransferase nscD catalyzes the addition of the dimethylallyl group to the aromatic C5. The FAD-dependent monooxygenase nscC is then responsible for the stereospecific hydroxylation at C2. Neosartoricin B can be converted into two additional compounds neosartoricins C and D. Neosartoricin C is a spirocyclic compound that is cyclized through the attack of C3 hydroxyl on C14, followed by dehydration. On the other hand, neosartoricin D is a further cyclized compound in which attack of C2 on C14 in neosartoricin C results in the formation of the acetal-containing dioxabicyclo-octanone ring. Both of these compounds are novel and possibly represent related metabolites of the gene cluster. The protein is Non-reducing polyketide synthase nscA of Trichophyton rubrum (strain ATCC MYA-4607 / CBS 118892) (Athlete's foot fungus).